We begin with the raw amino-acid sequence, 83 residues long: U-actitoxin-Aeq6a (83 aa).

The signal sequence occupies residues 1–20 (MIYKAVFVCLVLVLLGDVFC). A propeptide spanning residues 21-36 (SPRNSGGGTLNDNPFE) is cleaved from the precursor. At Pro82 the chain carries Proline amide.

Contains 3 disulfide bonds. Expressed by acrorhagi.

It localises to the secreted. The protein localises to the nematocyst. Its function is as follows. Toxin. The polypeptide is U-actitoxin-Aeq6a (Actinia equina (Beadlet anemone)).